Consider the following 1314-residue polypeptide: MKALDEPPYLTVGTDVSAKYRGAFCEAKIKTAKRLVKVKVTFRHDSSTVEVQDDHIKGPLKVGAIVEVKNLDGAYQEAVINKLTDASWYTVVFDDGDEKTLRRSSLCLKGERHFAESETLDQLPLTNPEHFGTPVIGKKTNRGRRSNHIPEEESSSSSSDDDEEERKQTDELLGKVVCVDYVSLEKKKAMWFPALVVCPDCSDEIAVKKDNILVRSFKDGKFTSVPRKDVHEITSDTVPKPDAVLKQAFDQALEFHKSRAIPANWKTELKEDSSSSEAEEEEEEEDDEKEKEDNSSEEEEEIEPFPEERENFLQQLYKFMEDRGTPINKRPVLGYRNLNLFKLFRLVHKLGGFDNIESGAVWKQVYQDLGIPVLNSAAGYNVKCAYKKYLYGFEEYCRSANIDFQMALPEKVLNKPCKDCENKEVKVKEESETEIKEVNVEDSKNVMPKEETPAEDESERKENIKPSLGSKKSLLECIPAQSDEEKEAHITKLEENENLEDKDGGRARTEEAFSTEVDGEEEQARSGDETNKEEDEDDEEIEEEEEEDEEEDEDEDDDDNNEEEEFECYPPGMKVQVRYGRGKNQKMYEASIKDSDVEGGEALYLVHYCGWNVRYDEWIKADKIVRPADKNVPKIKHRKKIKNKLDKEKDRDEKYSPKNCKLRRLSKSPFQSNPSPEMVSKLDLADAKNSDTAHIKSIEITSILNGLQASESSAEDSEQEDERCTQDVDNIGKDESKVEHSTHSRNELISKEEQSSPSLLEENKVHTDLVIAKTVSKSPERLRKDMEAISEDTDFEEEDEITKKRKDVKKDTTDKALKPQTKRGKRRYCSADECLQTGSPGKKEDRTKSKEPLCTENSSNSSSDEDEEEKSKAKMTPTKKYNGLEEKRKSLRTTSFYSGFSEVAEKRIKLLNNSDERLQNNRAKDRKDVWSSIQGQWPKKTLKELFSDSDTEAAASPPHPAPDEGAVEESLQTVAEEESCSPIMELEKPLPASVDNKPIEEKPLEVSDRKTEFPSSGSNSVLNTPPTTPESPSSVTITEASQQQSSVTVSVPLPPNQEEVRSIKSETDSTIEVDSVVGELQDLQSEGNSSPAGFDASVSSSSSNQPEPDNPEKACTGQKRVKDTQGVGSSSKKQKRSHKATVVNNKKKGKGTNSSDSEELSAGESVTKTQTIKSVPTGMKTHNSKSPARVQSPGKGGRNGDKDPDLKEPSNRLPKVYKWSFQTSDLENMTSAERISILQEKLQEIRKHYLSLKSEVASIDRRRKRLKKKERESAATSSSSSSPSSSSITAAVMLTLAEPSMSSASQNGMSVECR.

Disordered stretches follow at residues 123–169 (LPLT…RKQT) and 266–306 (KTEL…EPFP). Ser276, Ser295, and Ser296 each carry phosphoserine. The span at 277–305 (EAEEEEEEEDDEKEKEDNSSEEEEEIEPF) shows a compositional bias: acidic residues. An ARID domain is found at 306–398 (PEERENFLQQ…YLYGFEEYCR (93 aa)). Residues Lys428 and Lys461 each participate in a glycyl lysine isopeptide (Lys-Gly) (interchain with G-Cter in SUMO2) cross-link. Residues 439–464 (NVEDSKNVMPKEETPAEDESERKENI) show a composition bias toward basic and acidic residues. Disordered regions lie at residues 439-577 (NVED…KVQV), 635-678 (IKHR…SPEM), 709-888 (ASES…EEKR), 943-1215 (KELF…RLPK), and 1256-1290 (VASI…SITA). At Ser482 the chain carries Phosphoserine. Residues 486 to 511 (KEAHITKLEENENLEDKDGGRARTEE) are compositionally biased toward basic and acidic residues. Acidic residues predominate over residues 531-567 (NKEEDEDDEEIEEEEEEDEEEDEDEDDDDNNEEEEFE). One can recognise a Tudor-knot domain in the interval 572 to 624 (GMKVQVRYGRGKNQKMYEASIKDSDVEGGEALYLVHYCGWNVRYDEWIKADKI). Over residues 643–656 (NKLDKEKDRDEKYS) the composition is skewed to basic and acidic residues. A phosphoserine mark is found at Ser666, Ser668, Ser675, and Ser717. 2 stretches are compositionally biased toward basic and acidic residues: residues 722-754 (ERCT…KEEQ) and 778-787 (SPERLRKDME). Residue Lys751 forms a Glycyl lysine isopeptide (Lys-Gly) (interchain with G-Cter in SUMO2) linkage. 2 positions are modified to phosphoserine: Ser778 and Ser790. Residues 788–800 (AISEDTDFEEEDE) show a composition bias toward acidic residues. At Thr793 the chain carries Phosphothreonine. Composition is skewed to basic and acidic residues over residues 808-817 (VKKDTTDKAL), 841-853 (GKKE…KEPL), and 997-1012 (KPIE…RKTE). Positions 1013-1023 (FPSSGSNSVLN) are enriched in polar residues. Ser1016 is subject to Phosphoserine. The residue at position 1028 (Thr1028) is a Phosphothreonine. Positions 1030 to 1051 (ESPSSVTITEASQQQSSVTVSV) are enriched in low complexity. Ser1031 is subject to Phosphoserine. Residues 1058-1067 (EEVRSIKSET) are compositionally biased toward basic and acidic residues. Positions 1089 to 1103 (SSPAGFDASVSSSSS) are enriched in low complexity. The segment covering 1132–1150 (KKQKRSHKATVVNNKKKGK) has biased composition (basic residues). Phosphothreonine is present on Thr1152. Residues Ser1154, Ser1155, Ser1157, and Ser1161 each carry the phosphoserine modification. The span at 1164–1186 (ESVTKTQTIKSVPTGMKTHNSKS) shows a compositional bias: polar residues. Basic and acidic residues predominate over residues 1198–1210 (RNGDKDPDLKEPS). A coiled-coil region spans residues 1227-1272 (ENMTSAERISILQEKLQEIRKHYLSLKSEVASIDRRRKRLKKKERE). The segment covering 1274–1290 (AATSSSSSSPSSSSITA) has biased composition (low complexity).

In terms of assembly, component of a Sin3A corepressor complex consisting of SIN3A, SAP130, SUDS3/SAP45, SAP180, HDAC1 and HDAC2. Interacts with ARID4A. Interacts with AR. In terms of tissue distribution, expressed in Sertoli cells of the testis.

The protein resides in the nucleus. Functionally, acts as a transcriptional repressor. May function in the assembly and/or enzymatic activity of the Sin3A corepressor complex or in mediating interactions between the complex and other regulatory complexes. Plays a role in the regulation of epigenetic modifications at the PWS/AS imprinting center near the SNRPN promoter, where it might function as part of a complex with RB1 and ARID4A. Involved in spermatogenesis, together with ARID4A, where it functions as a transcriptional coactivator for AR (androgen receptor) and enhances expression of genes required for sperm maturation. Regulates expression of the tight junction protein CLDN3 in the testis, which is important for integrity of the blood-testis barrier. Plays a role in myeloid homeostasis where it regulates the histone methylation state of bone marrow cells and expression of various genes involved in hematopoiesis. May function as a leukemia suppressor. The sequence is that of AT-rich interactive domain-containing protein 4B (Arid4b) from Mus musculus (Mouse).